Here is a 431-residue protein sequence, read N- to C-terminus: Glutamate-1-semialdehyde 2,1-aminomutase (431 aa).

An N6-(pyridoxal phosphate)lysine modification is found at Lys269.

It belongs to the class-III pyridoxal-phosphate-dependent aminotransferase family. HemL subfamily. In terms of assembly, homodimer. Pyridoxal 5'-phosphate serves as cofactor.

The protein resides in the cytoplasm. It carries out the reaction (S)-4-amino-5-oxopentanoate = 5-aminolevulinate. It participates in porphyrin-containing compound metabolism; protoporphyrin-IX biosynthesis; 5-aminolevulinate from L-glutamyl-tRNA(Glu): step 2/2. The protein operates within porphyrin-containing compound metabolism; chlorophyll biosynthesis. The sequence is that of Glutamate-1-semialdehyde 2,1-aminomutase from Pelodictyon phaeoclathratiforme (strain DSM 5477 / BU-1).